A 757-amino-acid chain; its full sequence is Endonuclease MutS2 (757 aa).

321-328 (GPNMGGKT) serves as a coordination point for ATP. Residues 681 to 756 (IDIRGMTVEE…GTGVTVVEVK (76 aa)) form the Smr domain.

This sequence belongs to the DNA mismatch repair MutS family. MutS2 subfamily. Homodimer. Binds to stalled ribosomes, contacting rRNA. Interacts with MutL.

Nuclease activity is stimulated by interaction with MutL and inhibited in the presence of non-hydrolytic ATP (ADPnP). ATPase activity is stimulated by DNA. Its function is as follows. Endonuclease that is involved in the suppression of homologous recombination and thus may have a key role in the control of bacterial genetic diversity. Has ATPase activity. Binds to DNA. In terms of biological role, acts as a ribosome collision sensor, splitting the ribosome into its 2 subunits. Detects stalled/collided 70S ribosomes which it binds and splits by an ATP-hydrolysis driven conformational change. Acts upstream of the ribosome quality control system (RQC), a ribosome-associated complex that mediates the extraction of incompletely synthesized nascent chains from stalled ribosomes and their subsequent degradation. Probably generates substrates for RQC. This Thermotoga maritima (strain ATCC 43589 / DSM 3109 / JCM 10099 / NBRC 100826 / MSB8) protein is Endonuclease MutS2.